Consider the following 222-residue polypeptide: Ribonuclease 3 (222 aa).

The signal sequence occupies residues 1 to 19 (MKFFIFILALQQLYVQSFA). Glutamine 30 provides a ligand contact to RNA. Cysteine 36 and cysteine 42 are oxidised to a cystine. RNA-binding positions include histidine 57, phenylalanine 107, 110–111 (HE), and 114–115 (KH). The Proton donor role is filled by histidine 57. 3 disulfide bridges follow: cysteine 72/cysteine 118, cysteine 178/cysteine 213, and cysteine 194/cysteine 205. Glutamate 111 is a catalytic residue. Histidine 115 (proton acceptor) is an active-site residue.

Belongs to the RNase T2 family.

It catalyses the reaction a ribonucleotidyl-ribonucleotide-RNA + H2O = a 3'-end 3'-phospho-ribonucleotide-RNA + a 5'-end dephospho-ribonucleoside-RNA + H(+). In terms of biological role, may remobilize phosphate, particularly when cells senesce or when phosphate becomes limiting. This is Ribonuclease 3 (RNS3) from Arabidopsis thaliana (Mouse-ear cress).